The sequence spans 523 residues: Effector protein hopAB1 (523 aa).

Disordered regions lie at residues 1–94, 165–223, and 299–320; these read MPGI…EAQQ, VRQQ…QGLD, and RQTT…SGRR. The span at 18-31 shows a compositional bias: basic and acidic residues; the sequence is TDGEPVTEREHDSS. Over residues 181–194 the composition is skewed to low complexity; that stretch reads SSSGSSQRSLIGRS.

Belongs to the HopAB family.

It localises to the secreted. Effector protein that plays different roles depending on the species and plant cultivars that interact with the pathogen. Acts as a virulence determinant by enhancing the development of disease symptoms and bacterial growth. Acts as an avirulence factor by eliciting hypersensitive response (HR) and plant resistance. The chain is Effector protein hopAB1 (hopAB1) from Pseudomonas savastanoi pv. glycinea (Pseudomonas syringae pv. glycinea).